A 56-amino-acid chain; its full sequence is Large ribosomal subunit protein bL32 (56 aa).

The disordered stretch occupies residues 1-28 (MAVQQNRKTRSKRGMRRSHDALTTAALS). Residues 7-16 (RKTRSKRGMR) show a composition bias toward basic residues.

It belongs to the bacterial ribosomal protein bL32 family.

This Vibrio vulnificus (strain CMCP6) protein is Large ribosomal subunit protein bL32.